The primary structure comprises 307 residues: Cytochrome c1, heme protein, mitochondrial (307 aa).

The N-terminal 56 residues, methionine 1–tyrosine 56, are a transit peptide targeting the mitochondrion. Residues glycine 57 to methionine 269 lie on the Mitochondrial intermembrane side of the membrane. The Cytochrome c domain maps to alanine 89–serine 259. Cysteine 102, cysteine 105, histidine 106, and methionine 225 together coordinate heme c. Residues glycine 270–tyrosine 287 form a helical membrane-spanning segment. Over lysine 288–lysine 307 the chain is Mitochondrial matrix.

It belongs to the cytochrome c family. Component of the ubiquinol-cytochrome c oxidoreductase (cytochrome b-c1 complex, complex III, CIII), a multisubunit enzyme composed of 3 respiratory subunits cytochrome b, cytochrome c1 and Rieske protein, 2 core protein subunits, and additional low-molecular weight protein subunits. The complex exists as an obligatory dimer and forms supercomplexes (SCs) in the inner mitochondrial membrane with cytochrome c oxidase (complex IV, CIV). It depends on heme c as a cofactor.

Its subcellular location is the mitochondrion inner membrane. The catalysed reaction is a quinol + 2 Fe(III)-[cytochrome c](out) = a quinone + 2 Fe(II)-[cytochrome c](out) + 2 H(+)(out). Component of the ubiquinol-cytochrome c oxidoreductase, a multisubunit transmembrane complex that is part of the mitochondrial electron transport chain which drives oxidative phosphorylation. The respiratory chain contains 3 multisubunit complexes succinate dehydrogenase (complex II, CII), ubiquinol-cytochrome c oxidoreductase (cytochrome b-c1 complex, complex III, CIII) and cytochrome c oxidase (complex IV, CIV), that cooperate to transfer electrons derived from NADH and succinate to molecular oxygen, creating an electrochemical gradient over the inner membrane that drives transmembrane transport and the ATP synthase. The cytochrome b-c1 complex catalyzes electron transfer from ubiquinol to cytochrome c, linking this redox reaction to translocation of protons across the mitochondrial inner membrane, with protons being carried across the membrane as hydrogens on the quinol. In the process called Q cycle, 2 protons are consumed from the matrix, 4 protons are released into the intermembrane space and 2 electrons are passed to cytochrome c. Cytochrome c1 is a catalytic core subunit containing a c-type heme. It transfers electrons from the [2Fe-2S] iron-sulfur cluster of the Rieske protein to cytochrome c. The chain is Cytochrome c1, heme protein, mitochondrial (cyt1) from Schizosaccharomyces pombe (strain 972 / ATCC 24843) (Fission yeast).